A 162-amino-acid polypeptide reads, in one-letter code: UPF0763 protein Sdel_0383 (162 aa).

Belongs to the UPF0763 family.

The sequence is that of UPF0763 protein Sdel_0383 from Sulfurospirillum deleyianum (strain ATCC 51133 / DSM 6946 / 5175).